A 137-amino-acid polypeptide reads, in one-letter code: MERTFVMIKPDGVRRGLVGEILARFERKGFRIAALKLMRISQELAERHYAEHREKPFFPGLVRFITSGPVVAMVLEGPGVVAEVRKMMGATHPKDALPGTIRGDFATTIDENVIHGSATLEDAQREIALFFRPEELL.

Residues K9, F57, R85, T91, R102, and N112 each coordinate ATP. The active-site Pros-phosphohistidine intermediate is the H115.

Belongs to the NDK family. As to quaternary structure, homotetramer. It depends on Mg(2+) as a cofactor.

It localises to the cytoplasm. The enzyme catalyses a 2'-deoxyribonucleoside 5'-diphosphate + ATP = a 2'-deoxyribonucleoside 5'-triphosphate + ADP. It catalyses the reaction a ribonucleoside 5'-diphosphate + ATP = a ribonucleoside 5'-triphosphate + ADP. In terms of biological role, major role in the synthesis of nucleoside triphosphates other than ATP. The ATP gamma phosphate is transferred to the NDP beta phosphate via a ping-pong mechanism, using a phosphorylated active-site intermediate. The protein is Nucleoside diphosphate kinase of Thermus thermophilus (strain ATCC BAA-163 / DSM 7039 / HB27).